Here is a 385-residue protein sequence, read N- to C-terminus: Leucine aminopeptidase 1 (385 aa).

Residues 1–20 form the signal peptide; that stretch reads MKFPSLLSLGVAASTTIVAA. The propeptide occupies 21 to 87; the sequence is VPDQKPIGDI…FPKTFAQTTV (67 aa). N177 carries an N-linked (GlcNAc...) asparagine glycan. Residues H185, D204, E243, and D270 each contribute to the Zn(2+) site. C319 and C323 are joined by a disulfide. Zn(2+) is bound at residue H352.

It belongs to the peptidase M28 family. M28E subfamily. Monomer. Zn(2+) serves as cofactor.

It is found in the secreted. In terms of biological role, extracellular aminopeptidase that allows assimilation of proteinaceous substrates. This is Leucine aminopeptidase 1 (LAP1) from Ajellomyces capsulatus (strain G186AR / H82 / ATCC MYA-2454 / RMSCC 2432) (Darling's disease fungus).